A 488-amino-acid polypeptide reads, in one-letter code: Probable glycine dehydrogenase (decarboxylating) subunit 2 (488 aa).

Lys-274 carries the N6-(pyridoxal phosphate)lysine modification.

Belongs to the GcvP family. C-terminal subunit subfamily. As to quaternary structure, the glycine cleavage system is composed of four proteins: P, T, L and H. In this organism, the P 'protein' is a heterodimer of two subunits. Pyridoxal 5'-phosphate is required as a cofactor.

The enzyme catalyses N(6)-[(R)-lipoyl]-L-lysyl-[glycine-cleavage complex H protein] + glycine + H(+) = N(6)-[(R)-S(8)-aminomethyldihydrolipoyl]-L-lysyl-[glycine-cleavage complex H protein] + CO2. Its function is as follows. The glycine cleavage system catalyzes the degradation of glycine. The P protein binds the alpha-amino group of glycine through its pyridoxal phosphate cofactor; CO(2) is released and the remaining methylamine moiety is then transferred to the lipoamide cofactor of the H protein. This Listeria innocua serovar 6a (strain ATCC BAA-680 / CLIP 11262) protein is Probable glycine dehydrogenase (decarboxylating) subunit 2.